We begin with the raw amino-acid sequence, 636 residues long: DNA primase (636 aa).

The segment at 44–68 adopts a CHC2-type zinc-finger fold; the sequence is CPFHDEKTPSFHVRPNHGHFHCFGC. Residues 266 to 352 form the Toprim domain; it reads HQAVVVEGYT…SGQSFVAVAA (87 aa). Mg(2+)-binding residues include glutamate 272, aspartate 323, and aspartate 325. Positions 443-459 are enriched in basic and acidic residues; sequence REEAKGGGRKDNNRRGQ. Residues 443–481 form a disordered region; that stretch reads REEAKGGGRKDNNRRGQETAARPKPPPVQRPDPTDPTLW.

It belongs to the DnaG primase family. In terms of assembly, monomer. Interacts with DnaB. The cofactor is Zn(2+). It depends on Mg(2+) as a cofactor.

The catalysed reaction is ssDNA + n NTP = ssDNA/pppN(pN)n-1 hybrid + (n-1) diphosphate.. RNA polymerase that catalyzes the synthesis of short RNA molecules used as primers for DNA polymerase during DNA replication. The sequence is that of DNA primase from Mycolicibacterium smegmatis (strain ATCC 700084 / mc(2)155) (Mycobacterium smegmatis).